A 391-amino-acid chain; its full sequence is 4-hydroxy-3-methylbut-2-en-1-yl diphosphate synthase (flavodoxin) (391 aa).

The [4Fe-4S] cluster site is built by C281, C284, C316, and E323. The tract at residues 372 to 391 (EMGGEDGQGGIKGSPVVSVS) is disordered.

Belongs to the IspG family. Requires [4Fe-4S] cluster as cofactor.

It carries out the reaction (2E)-4-hydroxy-3-methylbut-2-enyl diphosphate + oxidized [flavodoxin] + H2O + 2 H(+) = 2-C-methyl-D-erythritol 2,4-cyclic diphosphate + reduced [flavodoxin]. The protein operates within isoprenoid biosynthesis; isopentenyl diphosphate biosynthesis via DXP pathway; isopentenyl diphosphate from 1-deoxy-D-xylulose 5-phosphate: step 5/6. In terms of biological role, converts 2C-methyl-D-erythritol 2,4-cyclodiphosphate (ME-2,4cPP) into 1-hydroxy-2-methyl-2-(E)-butenyl 4-diphosphate. The sequence is that of 4-hydroxy-3-methylbut-2-en-1-yl diphosphate synthase (flavodoxin) from Renibacterium salmoninarum (strain ATCC 33209 / DSM 20767 / JCM 11484 / NBRC 15589 / NCIMB 2235).